The following is a 227-amino-acid chain: 6,7-dimethyl-8-ribityllumazine synthase, chloroplastic (227 aa).

The N-terminal 71 residues, 1–71 (MKSLASPPCL…LRSSFVQTAA (71 aa)), are a transit peptide targeting the chloroplast. 5-amino-6-(D-ribitylamino)uracil is bound by residues phenylalanine 94, 128–130 (SFE), and 152–154 (AVI). Position 157-158 (157-158 (DT)) interacts with (2S)-2-hydroxy-3-oxobutyl phosphate. Histidine 160 serves as the catalytic Proton donor. Phenylalanine 185 is a 5-amino-6-(D-ribitylamino)uracil binding site. Arginine 199 lines the (2S)-2-hydroxy-3-oxobutyl phosphate pocket.

The protein belongs to the DMRL synthase family. In terms of assembly, oligomer forming an icosahedral capsid.

The protein localises to the plastid. The protein resides in the chloroplast. It carries out the reaction (2S)-2-hydroxy-3-oxobutyl phosphate + 5-amino-6-(D-ribitylamino)uracil = 6,7-dimethyl-8-(1-D-ribityl)lumazine + phosphate + 2 H2O + H(+). It functions in the pathway cofactor biosynthesis; riboflavin biosynthesis; riboflavin from 2-hydroxy-3-oxobutyl phosphate and 5-amino-6-(D-ribitylamino)uracil: step 1/2. Its function is as follows. Catalyzes the formation of 6,7-dimethyl-8-ribityllumazine by condensation of 5-amino-6-(D-ribitylamino)uracil with 3,4-dihydroxy-2-butanone 4-phosphate. This is the penultimate step in the biosynthesis of riboflavin. In Arabidopsis thaliana (Mouse-ear cress), this protein is 6,7-dimethyl-8-ribityllumazine synthase, chloroplastic.